Here is a 380-residue protein sequence, read N- to C-terminus: Shedu protein SduA (380 aa).

In terms of biological role, only component of antiviral defense system Shedu. Expression of Shedu in B.subtilis (strain BEST7003) confers resistance to phages phi105, phi29, rho14 and to a lesser extent to SPP1. May be an endonuclease. The protein is Shedu protein SduA of Bacillus cereus (strain B4264).